The chain runs to 224 residues: Ribose-5-phosphate isomerase A (224 aa).

Residues 32–35, 85–88, and 98–101 each bind substrate; these read TGST, DGAD, and KGGG. The active-site Proton acceptor is glutamate 107. Lysine 125 is a binding site for substrate.

It belongs to the ribose 5-phosphate isomerase family. Homodimer.

The catalysed reaction is aldehydo-D-ribose 5-phosphate = D-ribulose 5-phosphate. The protein operates within carbohydrate degradation; pentose phosphate pathway; D-ribose 5-phosphate from D-ribulose 5-phosphate (non-oxidative stage): step 1/1. In terms of biological role, catalyzes the reversible conversion of ribose-5-phosphate to ribulose 5-phosphate. In Pseudomonas putida (strain GB-1), this protein is Ribose-5-phosphate isomerase A.